The following is a 510-amino-acid chain: Probable RNA-binding protein 46 (510 aa).

A disordered region spans residues 23-42 (ENGQRKFGGPPPGWEGPPPP). The span at 31–42 (GPPPGWEGPPPP) shows a compositional bias: pro residues. RRM domains lie at 45-123 (REVF…VSLD), 125-207 (CRLF…WAEP), and 220-292 (RVLY…LAKP).

Expressed in the testis and ovary.

The protein resides in the cytoplasm. Essential for male and female fertility, playing a crucial role in regulating germ cell development by ensuring the proper progression of meiosis prophase I. The sequence is that of Probable RNA-binding protein 46 (rbm46) from Danio rerio (Zebrafish).